The primary structure comprises 34 residues: Photosystem II reaction center protein M (34 aa).

A helical transmembrane segment spans residues 5–25 (ILAFIATALFILIPTAFSLIL).

Belongs to the PsbM family. As to quaternary structure, PSII is composed of 1 copy each of membrane proteins PsbA, PsbB, PsbC, PsbD, PsbE, PsbF, PsbH, PsbI, PsbJ, PsbK, PsbL, PsbM, PsbT, PsbX, PsbY, PsbZ, Psb30/Ycf12, at least 3 peripheral proteins of the oxygen-evolving complex and a large number of cofactors. It forms dimeric complexes.

The protein resides in the plastid. Its subcellular location is the chloroplast thylakoid membrane. Functionally, one of the components of the core complex of photosystem II (PSII). PSII is a light-driven water:plastoquinone oxidoreductase that uses light energy to abstract electrons from H(2)O, generating O(2) and a proton gradient subsequently used for ATP formation. It consists of a core antenna complex that captures photons, and an electron transfer chain that converts photonic excitation into a charge separation. This subunit is found at the monomer-monomer interface. The protein is Photosystem II reaction center protein M of Huperzia lucidula (Shining clubmoss).